Reading from the N-terminus, the 297-residue chain is Acetyl-coenzyme A carboxylase carboxyl transferase subunit beta (297 aa).

In terms of domain architecture, CoA carboxyltransferase N-terminal spans 25–294 (LWVKCPETGQ…VPPKGRLPAP (270 aa)).

This sequence belongs to the AccD/PCCB family. In terms of assembly, acetyl-CoA carboxylase is a heterohexamer composed of biotin carboxyl carrier protein (AccB), biotin carboxylase (AccC) and two subunits each of ACCase subunit alpha (AccA) and ACCase subunit beta (AccD).

The protein resides in the cytoplasm. It catalyses the reaction N(6)-carboxybiotinyl-L-lysyl-[protein] + acetyl-CoA = N(6)-biotinyl-L-lysyl-[protein] + malonyl-CoA. It participates in lipid metabolism; malonyl-CoA biosynthesis; malonyl-CoA from acetyl-CoA: step 1/1. Component of the acetyl coenzyme A carboxylase (ACC) complex. Biotin carboxylase (BC) catalyzes the carboxylation of biotin on its carrier protein (BCCP) and then the CO(2) group is transferred by the transcarboxylase to acetyl-CoA to form malonyl-CoA. This chain is Acetyl-coenzyme A carboxylase carboxyl transferase subunit beta, found in Azorhizobium caulinodans (strain ATCC 43989 / DSM 5975 / JCM 20966 / LMG 6465 / NBRC 14845 / NCIMB 13405 / ORS 571).